The chain runs to 284 residues: Putative mitochondrial carrier protein PET8 (284 aa).

3 Solcar repeats span residues 2–75 (NTFF…MKVK), 92–178 (IDTT…LKKT), and 192–271 (KGAI…VHSL). 6 helical membrane passes run 5-25 (FLSLLSGAAAGTSTDLVFFPI), 50-70 (GLGSAVVASAPGASLFFISYD), 98-118 (MLSSSIGEICACLVRVPAEVV), 153-169 (GWSTTIMREIPFTCIQF), 194-214 (AICGSIAGGIAAATTTPLDFL), and 252-272 (MWISAGGAIFLGMYETVHSLL).

Belongs to the mitochondrial carrier (TC 2.A.29) family.

It localises to the mitochondrion inner membrane. This is Putative mitochondrial carrier protein PET8 (PET8) from Saccharomyces cerevisiae (strain ATCC 204508 / S288c) (Baker's yeast).